The sequence spans 66 residues: Large ribosomal subunit protein bL33 (66 aa).

This sequence belongs to the bacterial ribosomal protein bL33 family.

This is Large ribosomal subunit protein bL33 from Wolbachia sp. subsp. Brugia malayi (strain TRS).